The primary structure comprises 351 residues: sn-glycerol-3-phosphate import ATP-binding protein UgpC (351 aa).

In terms of domain architecture, ABC transporter spans 4–235 (IVLDNVRKSY…PASTFVATFI (232 aa)). An ATP-binding site is contributed by 37 to 44 (GPSGCGKS).

The protein belongs to the ABC transporter superfamily. sn-glycerol-3-phosphate importer (TC 3.A.1.1.3) family. The complex is composed of two ATP-binding proteins (UgpC), two transmembrane proteins (UgpA and UgpE) and a solute-binding protein (UgpB).

The protein localises to the cell inner membrane. The catalysed reaction is sn-glycerol 3-phosphate(out) + ATP + H2O = sn-glycerol 3-phosphate(in) + ADP + phosphate + H(+). Its function is as follows. Part of the ABC transporter complex UgpBAEC involved in sn-glycerol-3-phosphate (G3P) import. Responsible for energy coupling to the transport system. The polypeptide is sn-glycerol-3-phosphate import ATP-binding protein UgpC (Brucella abortus (strain 2308)).